The following is a 271-amino-acid chain: Interleukin-1 alpha (271 aa).

The propeptide occupies 1–112 (MAKVPDMFED…DSEEEIIKPR (112 aa)). The residue at position 82 (K82) is an N6-acetyllysine. Residues 82–86 (KKRRL) form a nuclear localization signal (NLS) region. S87 is subject to Phosphoserine. N-linked (GlcNAc...) asparagine glycosylation is found at N102, N121, N137, and N141.

It belongs to the IL-1 family. As to quaternary structure, monomer. Interacts with TMED10; the interaction mediates the translocation from the cytoplasm into the ERGIC (endoplasmic reticulum-Golgi intermediate compartment) and thereby secretion. Interacts with IL1R1. Interacts with S100A13; this interaction is the first step in the export of IL1A, followed by direct translocation of this complex across the plasma membrane. Acetylated within its nuclear localization sequence, which impacts subcellular localization. Post-translationally, proteolytic processed by CAPN1 in a calcium-dependent manner. Cleavage from 31 kDa precursor to 18 kDa biologically active molecules. In terms of processing, phosphorylated. Phosphorylation greatly enhances susceptibility to digestion and promotes the conversion of pre-IL1A alpha to the biologically active IL1A.

The protein resides in the nucleus. It localises to the cytoplasm. Its subcellular location is the secreted. Its function is as follows. Cytokine constitutively present intracellularly in nearly all resting non-hematopoietic cells that plays an important role in inflammation and bridges the innate and adaptive immune systems. After binding to its receptor IL1R1 together with its accessory protein IL1RAP, forms the high affinity interleukin-1 receptor complex. Signaling involves the recruitment of adapter molecules such as MYD88, IRAK1 or IRAK4. In turn, mediates the activation of NF-kappa-B and the three MAPK pathways p38, p42/p44 and JNK pathways. Within the cell, acts as an alarmin and cell death results in its liberation in the extracellular space after disruption of the cell membrane to induce inflammation and alert the host to injury or damage. In addition to its role as a danger signal, which occurs when the cytokine is passively released by cell necrosis, directly senses DNA damage and acts as signal for genotoxic stress without loss of cell integrity. The protein is Interleukin-1 alpha (IL1A) of Macaca fascicularis (Crab-eating macaque).